The sequence spans 558 residues: uncharacterized protein (558 aa).

The next 6 helical transmembrane spans lie at Leu-63 to Tyr-83, Val-90 to Ile-110, Val-143 to Gly-163, Val-168 to Cys-188, Ser-226 to Val-246, and Val-258 to Trp-278. The 52-residue stretch at Leu-279–Arg-330 folds into the HAMP domain. A Guanylate cyclase domain is found at Ala-362 to Cys-486. The segment at Thr-529–Gly-558 is disordered. Positions Thr-545–Gly-558 are enriched in basic and acidic residues.

This sequence belongs to the adenylyl cyclase class-3 family.

Its subcellular location is the cell membrane. This is an uncharacterized protein from Mycobacterium tuberculosis (strain CDC 1551 / Oshkosh).